Here is a 241-residue protein sequence, read N- to C-terminus: CRISPR-associated endoribonuclease Cas6 2 (241 aa).

The active-site Proton acceptor is the tyrosine 28. Residue histidine 40 is the Proton donor of the active site.

The protein belongs to the CRISPR-associated protein Cas6/Cse3/CasE family.

CRISPR (clustered regularly interspaced short palindromic repeat) is an adaptive immune system that provides protection against mobile genetic elements (viruses, transposable elements and conjugative plasmids). CRISPR clusters contain sequences complementary to antecedent mobile elements and target invading nucleic acids. CRISPR clusters are transcribed and processed into CRISPR RNA (crRNA). This protein processes pre-crRNA into individual crRNA units. The chain is CRISPR-associated endoribonuclease Cas6 2 (cas6b) from Methanocaldococcus jannaschii (strain ATCC 43067 / DSM 2661 / JAL-1 / JCM 10045 / NBRC 100440) (Methanococcus jannaschii).